A 358-amino-acid chain; its full sequence is Protein-arginine kinase (358 aa).

One can recognise a Phosphagen kinase C-terminal domain in the interval 24-255; it reads IVLSSRIRLA…KQLIRQERVA (232 aa). ATP-binding positions include 27 to 31, H92, R126, 177 to 181, and 208 to 213; these read SSRIR, RASVM, and RGIYGE. Positions 338–343 match the RDXXRA motif of the pArg binding pocket involved in allosteric regulation motif; that stretch reads RDERRA.

This sequence belongs to the ATP:guanido phosphotransferase family.

The enzyme catalyses L-arginyl-[protein] + ATP = N(omega)-phospho-L-arginyl-[protein] + ADP + H(+). Appears to be allosterically activated by the binding of pArg-containing polypeptides to the pArg-binding pocket localized in the C-terminal domain of McsB. Catalyzes the specific phosphorylation of arginine residues in a large number of proteins. Is part of the bacterial stress response system. Protein arginine phosphorylation has a physiologically important role and is involved in the regulation of many critical cellular processes, such as protein homeostasis, motility, competence, and stringent and stress responses, by regulating gene expression and protein activity. The polypeptide is Protein-arginine kinase (Shouchella clausii (strain KSM-K16) (Alkalihalobacillus clausii)).